An 843-amino-acid polypeptide reads, in one-letter code: Glycogen phosphorylase, brain form (843 aa).

N-acetylalanine is present on Ala-2. Ser-15 is subject to Phosphoserine; by PHK; in form phosphorylase A. The AMP site is built by Asp-43, Tyr-197, and Arg-310. The residue at position 197 (Tyr-197) is a Phosphotyrosine. The residue at position 473 (Tyr-473) is a Phosphotyrosine. A pyridoxal 5'-phosphate-binding site is contributed by Lys-569. The pyridoxal 5'-phosphate stretch occupies residues 677-678 (TG). Position 681 is an N6-(pyridoxal phosphate)lysine (Lys-681).

Belongs to the glycogen phosphorylase family. Homodimer. Dimers associate into a tetramer to form the enzymatically active phosphorylase A. The cofactor is pyridoxal 5'-phosphate. In terms of processing, phosphorylation of Ser-15 converts phosphorylase B (unphosphorylated) to phosphorylase A.

It carries out the reaction [(1-&gt;4)-alpha-D-glucosyl](n) + phosphate = [(1-&gt;4)-alpha-D-glucosyl](n-1) + alpha-D-glucose 1-phosphate. With respect to regulation, activity of phosphorylase is controlled both by allosteric means (through the non-covalent binding of metabolites) and by covalent modification. Thus AMP allosterically activates, whereas ATP, ADP, and glucose-6-phosphate allosterically inhibit, phosphorylase B. In terms of biological role, glycogen phosphorylase that regulates glycogen mobilization. Phosphorylase is an important allosteric enzyme in carbohydrate metabolism. Enzymes from different sources differ in their regulatory mechanisms and in their natural substrates. However, all known phosphorylases share catalytic and structural properties. The polypeptide is Glycogen phosphorylase, brain form (PYGB) (Ovis aries (Sheep)).